A 441-amino-acid chain; its full sequence is Glutamate--tRNA ligase 1 (441 aa).

The 'HIGH' region signature appears at 8–18; the sequence is PSPTGHIHVGN. Positions 239-243 match the 'KMSKS' region motif; sequence ELSKR. Position 242 (lysine 242) interacts with ATP.

It belongs to the class-I aminoacyl-tRNA synthetase family. Glutamate--tRNA ligase type 1 subfamily. Monomer.

The protein resides in the cytoplasm. It catalyses the reaction tRNA(Glu) + L-glutamate + ATP = L-glutamyl-tRNA(Glu) + AMP + diphosphate. Its function is as follows. Catalyzes the attachment of glutamate to tRNA(Glu) in a two-step reaction: glutamate is first activated by ATP to form Glu-AMP and then transferred to the acceptor end of tRNA(Glu). In Paracoccus denitrificans (strain Pd 1222), this protein is Glutamate--tRNA ligase 1.